The primary structure comprises 599 residues: Pentatricopeptide repeat-containing protein At3g62470, mitochondrial (599 aa).

Residues 1–99 (MAAAPWLHLS…RGFSSGSSNV (99 aa)) constitute a mitochondrion transit peptide. PPR repeat units follow at residues 194–228 (DSRTYNSMMSILAKTRQFETMVSVLEEMGTKGLLT), 230–262 (ETFTIAMKAFAAAKERKKAVGIFELMKKYKFKI), 263–293 (GVETINCLLDSLGRAKLGKEAQVLFDKLKER), 297–331 (NMMTYTVLLNGWCRVRNLIEAARIWNDMIDQGLKP), 332–366 (DIVAHNVMLEGLLRSRKKSDAIKLFHVMKSKGPCP), 367–401 (NVRSYTIMIRDFCKQSSMETAIEYFDDMVDSGLQP), 402–436 (DAAVYTCLITGFGTQKKLDTVYELLKEMQEKGHPP), 437–471 (DGKTYNALIKLMANQKMPEHATRIYNKMIQNEIEP), 472–506 (SIHTFNMIMKSYFMARNYEMGRAVWEEMIKKGICP), and 507–541 (DDNSYTVLIRGLIGEGKSREACRYLEEMLDKGMKT).

It belongs to the PPR family. P subfamily.

Its subcellular location is the mitochondrion. The sequence is that of Pentatricopeptide repeat-containing protein At3g62470, mitochondrial from Arabidopsis thaliana (Mouse-ear cress).